The following is a 163-amino-acid chain: Calmodulin (163 aa).

Position 2 is an N-acetylalanine (A2). EF-hand domains are found at residues 11 to 46 (EQIA…LGQN), 47 to 82 (PTEA…KMKE), 84 to 119 (DHED…LGEK), and 120 to 155 (LSEE…GATD). D24, D26, D28, T30, E35, D60, D62, N64, T66, E71, D97, D99, N101, E108, D133, D135, D137, Q139, and E144 together coordinate Ca(2+).

The protein belongs to the calmodulin family. In terms of assembly, associates with the spoke-associated complex containing CFAP61, CFAP91 and CFAP251; the association is calcium sensitive. Trimethylation of Lys-119 observed in other calmodulins is absent here.

Its subcellular location is the cytoplasm. It localises to the cytoskeleton. The protein localises to the flagellum axoneme. Functionally, calmodulin mediates the control of a large number of enzymes, ion channels and other proteins by Ca(2+). Among the enzymes to be stimulated by the calmodulin-Ca(2+) complex are a number of protein kinases and phosphatases. The chain is Calmodulin from Chlamydomonas reinhardtii (Chlamydomonas smithii).